Here is a 2157-residue protein sequence, read N- to C-terminus: Conidial yellow pigment biosynthesis polyketide synthase (2157 aa).

An N-terminal acylcarrier protein transacylase domain (SAT) region spans residues 8 to 244 (YLFGDQTGDF…VMVPIHGPFH (237 aa)). One can recognise a Ketosynthase family 3 (KS3) domain in the interval 376–807 (LSKIAIIGMS…GGNTALLLED (432 aa)). Residues Cys548, His683, and His725 each act as for beta-ketoacyl synthase activity in the active site. Residues 912 to 1232 (FLFTGQGAQY…LSSLYLAGVD (321 aa)) are malonyl-CoA:ACP transacylase (MAT) domain. Ser1001 acts as the For acyl/malonyl transferase activity in catalysis. Residues 1290-1603 (TTSAQRVVES…RKILDIALPP (314 aa)) form a product template (PT) domain region. Residues 1294-1425 (QRVVESRDDG…CEVKLFDCMA (132 aa)) form an N-terminal hotdog fold region. In terms of domain architecture, PKS/mFAS DH spans 1294–1598 (QRVVESRDDG…FQALSRKILD (305 aa)). The active-site Proton acceptor; for dehydratase activity is the His1326. A C-terminal hotdog fold region spans residues 1453 to 1598 (AHRLRRGMVY…FQALSRKILD (146 aa)). Residue Asp1511 is the Proton donor; for dehydratase activity of the active site. The disordered stretch occupies residues 1607–1638 (SKAQTSPIQSSAPQKPIETAKPTSRPAPPVTM). The segment covering 1608–1619 (KAQTSPIQSSAP) has biased composition (polar residues). Positions 1645 to 1722 (SAGPSVVVRA…DFKRFVTQLS (78 aa)) constitute a Carrier 1 domain. Position 1682 is an O-(pantetheine 4'-phosphoryl)serine (Ser1682). The tract at residues 1725-1760 (VASDSSSTDRESEYSFNGDSCSGLSSPASPGTVSPP) is disordered. Polar residues predominate over residues 1741 to 1759 (NGDSCSGLSSPASPGTVSP). The 78-residue stretch at 1767 to 1844 (IHENGTMKEI…QIETALDLKP (78 aa)) folds into the Carrier 2 domain. Ser1804 is subject to O-(pantetheine 4'-phosphoryl)serine. The tract at residues 1847–1888 (VPTAVPQSQPITLPQSQSTKQLSTRPTSSSDNHPPATSILLQ) is disordered. Residues 1851–1878 (VPQSQPITLPQSQSTKQLSTRPTSSSDN) show a composition bias toward polar residues. The claisen cyclase domain stretch occupies residues 1877–2149 (DNHPPATSIL…ELATFMKNAL (273 aa)). The active-site For thioesterase activity is Ser1967.

Pantetheine 4'-phosphate serves as cofactor.

The catalysed reaction is 6 malonyl-CoA + acetyl-CoA + 6 H(+) = naphtopyrone YWA1 + 6 CO2 + 7 CoA + H2O. Its pathway is polyketide biosynthesis; heptaketide naphthopyrone YWA1 biosynthesis. Its function is as follows. Non-reducing polyketide synthase that condenses acetate units to form a heptaketide naphthopyrene YWA1, a yellow pigment found in mature asexual spores (conidia), via a polyketomethylene intermediate step. This Emericella nidulans (strain FGSC A4 / ATCC 38163 / CBS 112.46 / NRRL 194 / M139) (Aspergillus nidulans) protein is Conidial yellow pigment biosynthesis polyketide synthase.